Reading from the N-terminus, the 397-residue chain is Phosphonopyruvate decarboxylase (397 aa).

This sequence belongs to the TPP enzyme family. Requires thiamine diphosphate as cofactor. Mg(2+) is required as a cofactor.

The catalysed reaction is 3-phosphonopyruvate + H(+) = phosphonoacetaldehyde + CO2. The protein operates within secondary metabolite biosynthesis; bialaphos biosynthesis. Its function is as follows. Involved in the biosynthesis of phosphinothricin tripeptide (PTT), also known as bialaphos (BA), a natural-product antibiotic and potent herbicide. Catalyzes the decarboxylation of phosphonopyruvate (PnPy) to generate phosphonoacetaldehyde (PnAA). This Streptomyces viridochromogenes (strain DSM 40736 / JCM 4977 / BCRC 1201 / Tue 494) protein is Phosphonopyruvate decarboxylase.